The primary structure comprises 105 residues: Large ribosomal subunit protein uL24 (105 aa).

It belongs to the universal ribosomal protein uL24 family. In terms of assembly, part of the 50S ribosomal subunit.

Functionally, one of two assembly initiator proteins, it binds directly to the 5'-end of the 23S rRNA, where it nucleates assembly of the 50S subunit. One of the proteins that surrounds the polypeptide exit tunnel on the outside of the subunit. In Wolbachia sp. subsp. Brugia malayi (strain TRS), this protein is Large ribosomal subunit protein uL24.